The following is a 276-amino-acid chain: Ribosomal RNA small subunit methyltransferase A (276 aa).

S-adenosyl-L-methionine-binding residues include N27, L29, G54, E75, D101, and N123.

Belongs to the class I-like SAM-binding methyltransferase superfamily. rRNA adenine N(6)-methyltransferase family. RsmA subfamily.

It is found in the cytoplasm. It carries out the reaction adenosine(1518)/adenosine(1519) in 16S rRNA + 4 S-adenosyl-L-methionine = N(6)-dimethyladenosine(1518)/N(6)-dimethyladenosine(1519) in 16S rRNA + 4 S-adenosyl-L-homocysteine + 4 H(+). Specifically dimethylates two adjacent adenosines (A1518 and A1519) in the loop of a conserved hairpin near the 3'-end of 16S rRNA in the 30S particle. May play a critical role in biogenesis of 30S subunits. This Bartonella henselae (strain ATCC 49882 / DSM 28221 / CCUG 30454 / Houston 1) (Rochalimaea henselae) protein is Ribosomal RNA small subunit methyltransferase A.